The chain runs to 250 residues: 5'-nucleotidase SurE (250 aa).

Residues Asp-8, Asp-9, Ser-39, and Asn-95 each coordinate a divalent metal cation.

It belongs to the SurE nucleotidase family. Requires a divalent metal cation as cofactor.

It is found in the cytoplasm. It catalyses the reaction a ribonucleoside 5'-phosphate + H2O = a ribonucleoside + phosphate. In terms of biological role, nucleotidase that shows phosphatase activity on nucleoside 5'-monophosphates. The protein is 5'-nucleotidase SurE of Cupriavidus taiwanensis (strain DSM 17343 / BCRC 17206 / CCUG 44338 / CIP 107171 / LMG 19424 / R1) (Ralstonia taiwanensis (strain LMG 19424)).